The primary structure comprises 578 residues: MDNANCVGGCKFETRSFQYRRRIPYSLGADPLPPVHPLSLKNLVDIDTDLISSQLYELYDSIILNDSGLERRYAFVQKLEQILKKEFPYKNIKTSLFGSTQSLLASNASDIDLCIITDPPQCAPTTCEVSAAFARNGLKKVVCISTAKVPIVKVWDSELQLSCDCNINKTISTLNTRLMRSYVLCDPRVRPLIVMIKYWAKRRCLNDAAEGGTLTSYTISCMVINFLQKRDPPILPSLQMLPHLQDSSTMTDGLDVSFFDDPDLVHGFGDKNEESLGILFVEFFRFFGYLFDYEHFVLSIRHGTFLSKRAKGWQFQLNNFLCVEEPFHTSRNLANTADEITMKGIQLEFRRVFRLLAYNCNVDDACSQFTFPSLTDTSFMDDYVNELQLEIVPGFSHGRDSSDTSCTESPPEPSHFAWAFDPYNATASPYYNQNINSSIDYSSIYSNDVPAIPPNVPYTFVDPYTYACYINNNSYLPPSYMDFYTWYNSPYPKSSHHFDERHGGDRHEKNLSNSRRYSRNKFHKKKQSSGPFQYYPDAFSFTPTDNNSPPSNSSSSEVVSPVSLHSEPVLSTVQAFKS.

Mg(2+) is bound by residues Asp110 and Asp112. The region spanning 275-330 (SLGILFVEFFRFFGYLFDYEHFVLSIRHGTFLSKRAKGWQFQLNNFLCVEEPFHTS) is the PAP-associated domain. The disordered stretch occupies residues 495-565 (SHHFDERHGG…SEVVSPVSLH (71 aa)). The span at 496–510 (HHFDERHGGDRHEKN) shows a compositional bias: basic and acidic residues. Basic residues predominate over residues 516–527 (RYSRNKFHKKKQ). The segment covering 547 to 565 (NSPPSNSSSSEVVSPVSLH) has biased composition (low complexity).

It belongs to the DNA polymerase type-B-like family. In terms of assembly, interacts with pab1. Requires Mg(2+) as cofactor. Mn(2+) serves as cofactor.

It is found in the cytoplasm. It localises to the nucleus. The enzyme catalyses RNA(n) + ATP = RNA(n)-3'-adenine ribonucleotide + diphosphate. In terms of biological role, polymerase that creates the 3' poly(A) tail of suc22 mRNA. In Schizosaccharomyces pombe (strain 972 / ATCC 24843) (Fission yeast), this protein is Poly(A) RNA polymerase cid13 (cid13).